A 322-amino-acid polypeptide reads, in one-letter code: MRPEAQTGHLPVSQSPAVHLPVLYTQVLEGLRVIENGRYLDGTFGRGGHARGVLTQLGPEGRLLVMDKDPEAIAVAERDFAPDPRVSIFRGSFAQLLQWDATAEGLDGVLFDLGVSSPQLDVAERGFSFGKDGPLDMRMDPDSGESAAQWINRVEEREIADVLWTYGEERQSRRIARAIVARREKQPFSRTAELAELIASVMPRGKDKIHPATRSFQAIRIHINRELADLEAGLDAAVERLKPGGRLAVISFHSLEDRIVKQYMNRLAKAPPANRRLPEAVAFVPTLDLIGGAIKATDEELAANPRARSAVLRVAQKREADA.

S-adenosyl-L-methionine-binding positions include 47–49 (GGH), aspartate 67, phenylalanine 93, aspartate 112, and glutamine 119.

Belongs to the methyltransferase superfamily. RsmH family.

The protein localises to the cytoplasm. It catalyses the reaction cytidine(1402) in 16S rRNA + S-adenosyl-L-methionine = N(4)-methylcytidine(1402) in 16S rRNA + S-adenosyl-L-homocysteine + H(+). Its function is as follows. Specifically methylates the N4 position of cytidine in position 1402 (C1402) of 16S rRNA. The chain is Ribosomal RNA small subunit methyltransferase H from Stenotrophomonas maltophilia (strain K279a).